A 177-amino-acid chain; its full sequence is Cell division protein ZapC (177 aa).

Belongs to the ZapC family. In terms of assembly, interacts directly with FtsZ.

It localises to the cytoplasm. Functionally, contributes to the efficiency of the cell division process by stabilizing the polymeric form of the cell division protein FtsZ. Acts by promoting interactions between FtsZ protofilaments and suppressing the GTPase activity of FtsZ. This is Cell division protein ZapC from Shewanella oneidensis (strain ATCC 700550 / JCM 31522 / CIP 106686 / LMG 19005 / NCIMB 14063 / MR-1).